Here is a 436-residue protein sequence, read N- to C-terminus: Glutamyl-tRNA reductase (436 aa).

Substrate contacts are provided by residues 49–52 (TCNR), Ser-109, 114–116 (EGQ), and Gln-120. Cys-50 acts as the Nucleophile in catalysis. Residue 198–203 (GAGRMS) coordinates NADP(+).

It belongs to the glutamyl-tRNA reductase family. In terms of assembly, homodimer.

It carries out the reaction (S)-4-amino-5-oxopentanoate + tRNA(Glu) + NADP(+) = L-glutamyl-tRNA(Glu) + NADPH + H(+). Its pathway is porphyrin-containing compound metabolism; protoporphyrin-IX biosynthesis; 5-aminolevulinate from L-glutamyl-tRNA(Glu): step 1/2. It participates in porphyrin-containing compound metabolism; chlorophyll biosynthesis. In terms of biological role, catalyzes the NADPH-dependent reduction of glutamyl-tRNA(Glu) to glutamate 1-semialdehyde (GSA). The polypeptide is Glutamyl-tRNA reductase (Prochlorococcus marinus (strain MIT 9215)).